Consider the following 1196-residue polypeptide: MGSEGNMKKSVVTQVSIGGFGESTTAKQLTDYLEDEVGIVWRCRLKTSWTPPGSYPNFEIADTSNIPSIDEYKKVEPHAFVHFAVFESAGRAMDAAGQCNLILDGQPLKVSLGPKNPYSLNQRRRTTVPYKLAGITLEIGTLVSRDDFFVSWRAEGVDFLVDPFDNTCKFCFRKSTAFSFKDAVMHAVINCDYKLELLVRDIQTVRQYKTLHGFVLILQLASSPRVWYRTADDDIYDTVPGDLLDDDDPWIRTTDFTQVGAIGRCHSYRVLISPRYENKLRTALDYFRMRRVQEERVRWPPRIRNEPCFGEPVSDHFFCIHHKEGISFEIMFLVNSVLHRGVFNQFQLTERFFDLLRNQPKDVNIASLKHLCTYKRPVFDAYKRLKLVQEWIQKNPKLLGSHEQSEDISEIRRLVITPTRAYCLPPEVELSNRVLRRYKAVAERFLRVTFMDESMQTINSNVLSYFVAPIVKDLTSSSFSQKTYVFKRVKSILTDGFKLCGRKYSFLAFSANQLRDRSAWFFAEDGKTRVSDIKTWMGKFKDKNVAKCAARMGLCFSSTYATVDVMPHEVDTEVPDIERNGYVFSDGIGTITPDLADEVMEKLKLDVHYSPCAYQIRYAGFKGVVARWPSKSDGIRLALRDSMKKFFSKHTILEICSWTRFQPGFLNRQIITLLSVLGVPDEIFWDMQESMLYKLNRILDDTDVAFEVLTASCAEQGNTAAIMLSAGFKPKTEPHLRGMLSSVRIAQLWGLREKSRIFVTSGRWLMGCLDEAGILEHGQCFIQVSKPSIENCFSKHGSRFKETKTDLEVVKGYVAIAKNPCLHPGDVRILEAVDVPQLHHMYDCLIFPQKGDRPHTNEASGSDLDGDLYFVAWDQKLIPPNRKSYPAMHYDAAEEKSLGRAVNHQDIIDFFARNLANEQLGTICNAHVVHADRSEYGAMDEECLLLAELAATAVDFPKTGKIVSMPFHLKPKLYPDFMGKEDYQTYKSNKILGRLYRRVKEVYDEDAEASSEESTDPSAIPYDAVLEIPGFEDLIPEAWGHKCLYDGQLIGLLGQYKVQKEEEIVTGHIWSMPKYTSKKQGELKERLKHSYNSLKKEFRKVFEETIPDHENLSEEEKNILYEKKASAWYHVTYHPEWVKKSLELQDPDESSHAAMLSFAWIAADYLARIKIRSREMGSIDSAKPVDSLAKFLAQRL.

This sequence belongs to the RdRP family. Interacts with SGS3. As to expression, widely expressed.

Its subcellular location is the cytoplasmic granule. It localises to the nucleus. The catalysed reaction is RNA(n) + a ribonucleoside 5'-triphosphate = RNA(n+1) + diphosphate. RNA-dependent RNA polymerase involved in post-transcriptional gene silencing (PTGS). Possesses ssRNA and ssDNA-dependent polymerase activity, but does not have priming activity. Possesses in vitro 3' nucleotidyltransferase activity in the presence of UTP as single nucleotide. Required for the production of 21 nucleotide trans-acting small interfering RNAs (ta-siRNAs) derived from TAS1, TAS2 and TAS3 endogenous transcripts. Acts in the RDR6/SGS3/DCL4/AGO7 ta-siRNA pathway involved in leaf developmental timing. Required for the production of natural siRNAs (nat-siRNAs) derived from cis-natural antisense transcripts. Required for the production of 24 nucleotide nat-siRNAs derived from the stress-related P5CDH-SRO5 antisense gene pair. Required for PTGS induced by transgene direct repeats. Plays an essential role in transitive silencing of transgenes by processing secondary siRNAs. This pathway, which requires DCL2 and DCL4, amplifies silencing by using the target RNA as substrate to generate secondary siRNAs, providing an efficient mechanism for long-distance silencing. Involved in the biogenesis of secondary siRNAs which require 22 nucleotide miRNAs associated to AGO1. Participates synergistically with AS1 and AS2 to proper plant development by repressing the miR165 and miR166 microRNAs (independently of AGO10) that may lead to mRNA degradation of genes in the class III HD-ZIP family. Required for the production of some small RNAs derived from the crucifer-infecting tobamovirus (TMV-cg). Required for sense virus-induced post-transcriptional gene silencing (S-PTGS). The protein is RNA-dependent RNA polymerase 6 (RDR6) of Arabidopsis thaliana (Mouse-ear cress).